The following is a 107-amino-acid chain: Universal stress protein B homolog (107 aa).

Transmembrane regions (helical) follow at residues 6–25 (TILFALMLVTAINVARYVTA) and 89–106 (LFILSGSLLVLTTVVAFM).

Belongs to the universal stress protein B family.

The protein localises to the cell inner membrane. The polypeptide is Universal stress protein B homolog (Vibrio cholerae serotype O1 (strain ATCC 39541 / Classical Ogawa 395 / O395)).